Consider the following 35-residue polypeptide: Photosystem II reaction center protein M (35 aa).

The helical transmembrane segment at 7 to 27 (GLLATILVILVPSIFLVILYV) threads the bilayer.

It belongs to the PsbM family. PSII is composed of 1 copy each of membrane proteins PsbA, PsbB, PsbC, PsbD, PsbE, PsbF, PsbH, PsbI, PsbJ, PsbK, PsbL, PsbM, PsbT, PsbX, PsbY, PsbZ, Psb30/Ycf12, peripheral proteins PsbO, CyanoQ (PsbQ), PsbU, PsbV and a large number of cofactors. It forms dimeric complexes.

Its subcellular location is the cellular thylakoid membrane. In terms of biological role, one of the components of the core complex of photosystem II (PSII). PSII is a light-driven water:plastoquinone oxidoreductase that uses light energy to abstract electrons from H(2)O, generating O(2) and a proton gradient subsequently used for ATP formation. It consists of a core antenna complex that captures photons, and an electron transfer chain that converts photonic excitation into a charge separation. This subunit is found at the monomer-monomer interface. This chain is Photosystem II reaction center protein M, found in Synechococcus sp. (strain JA-3-3Ab) (Cyanobacteria bacterium Yellowstone A-Prime).